Here is a 275-residue protein sequence, read N- to C-terminus: MNINYWLKKAIKKLSHCENPRYEAEILLSHVLKCTRIAIIINQEIDLSKEQYQKLNNFIYRRSIGEPIAYIIGKKEFWSLSLCVSYKTLIPRPDTEILVEKILSKVNKNFRSILDLGTGSGAIALALASVCSHWNIIGVDNSYSALKIAKINGLKLNLKNVEFFYSNWFSHINEKFHIIVSNPPYIGIKEIQSLKKDIFYEPFNALISKKDGLLDIELIIQKASQYLFDKGWLFIEHGWKQKLKVQYFFKKYNFFCIQSFKDYGGNDRITFGQKK.

S-adenosyl-L-methionine contacts are provided by residues 117–121, aspartate 140, tryptophan 168, and asparagine 182; that span reads GTGSG. Substrate is bound at residue 182 to 185; the sequence is NPPY.

This sequence belongs to the protein N5-glutamine methyltransferase family. PrmC subfamily.

The enzyme catalyses L-glutaminyl-[peptide chain release factor] + S-adenosyl-L-methionine = N(5)-methyl-L-glutaminyl-[peptide chain release factor] + S-adenosyl-L-homocysteine + H(+). Functionally, methylates the class 1 translation termination release factors RF1/PrfA and RF2/PrfB on the glutamine residue of the universally conserved GGQ motif. The sequence is that of Release factor glutamine methyltransferase from Buchnera aphidicola subsp. Schizaphis graminum (strain Sg).